Reading from the N-terminus, the 601-residue chain is Elongation factor 4 (601 aa).

Residues 6-188 enclose the tr-type G domain; sequence SHIRNFSIIA…QIVHRVPAPE (183 aa). Residues 18–23 and 135–138 each bind GTP; these read DHGKST and NKID.

The protein belongs to the TRAFAC class translation factor GTPase superfamily. Classic translation factor GTPase family. LepA subfamily.

It localises to the cell inner membrane. It carries out the reaction GTP + H2O = GDP + phosphate + H(+). Required for accurate and efficient protein synthesis under certain stress conditions. May act as a fidelity factor of the translation reaction, by catalyzing a one-codon backward translocation of tRNAs on improperly translocated ribosomes. Back-translocation proceeds from a post-translocation (POST) complex to a pre-translocation (PRE) complex, thus giving elongation factor G a second chance to translocate the tRNAs correctly. Binds to ribosomes in a GTP-dependent manner. This Anaeromyxobacter sp. (strain K) protein is Elongation factor 4.